The following is a 328-amino-acid chain: Phosphatidylglycerol--prolipoprotein diacylglyceryl transferase (328 aa).

A run of 3 helical transmembrane segments spans residues 15-35 (VIQG…ILIS), 58-78 (FMFS…TLVY), and 106-126 (GMAI…IINT). Arg156 serves as a coordination point for a 1,2-diacyl-sn-glycero-3-phospho-(1'-sn-glycerol). Helical transmembrane passes span 242 to 262 (GFIF…IEYL) and 289 to 309 (ISMG…WVVV).

It belongs to the Lgt family.

It is found in the cell inner membrane. It carries out the reaction L-cysteinyl-[prolipoprotein] + a 1,2-diacyl-sn-glycero-3-phospho-(1'-sn-glycerol) = an S-1,2-diacyl-sn-glyceryl-L-cysteinyl-[prolipoprotein] + sn-glycerol 1-phosphate + H(+). It participates in protein modification; lipoprotein biosynthesis (diacylglyceryl transfer). Catalyzes the transfer of the diacylglyceryl group from phosphatidylglycerol to the sulfhydryl group of the N-terminal cysteine of a prolipoprotein, the first step in the formation of mature lipoproteins. The chain is Phosphatidylglycerol--prolipoprotein diacylglyceryl transferase from Borrelia garinii subsp. bavariensis (strain ATCC BAA-2496 / DSM 23469 / PBi) (Borreliella bavariensis).